We begin with the raw amino-acid sequence, 391 residues long: Putative alpha-ketoglutarate-dependent sulfonate dioxygenase (391 aa).

Residues H204 and D206 each coordinate Fe cation. T231 and W338 together coordinate 2-oxoglutarate. Fe cation is bound at residue H353. 2-oxoglutarate contacts are provided by R364 and R368.

The protein belongs to the TfdA dioxygenase family. It depends on Fe(2+) as a cofactor.

It functions in the pathway organosulfur degradation; alkanesulfonate degradation. Its function is as follows. Acts as an alpha-ketoglutarate-dependent dioxygenase active on sulfonates. The sequence is that of Putative alpha-ketoglutarate-dependent sulfonate dioxygenase from Schizosaccharomyces pombe (strain 972 / ATCC 24843) (Fission yeast).